The sequence spans 339 residues: Heat-inducible transcription repressor HrcA (339 aa).

Belongs to the HrcA family.

In terms of biological role, negative regulator of class I heat shock genes (grpE-dnaK-dnaJ and groELS operons). Prevents heat-shock induction of these operons. The protein is Heat-inducible transcription repressor HrcA of Clostridioides difficile (strain 630) (Peptoclostridium difficile).